The chain runs to 286 residues: Prohibitin-2, mitochondrial (286 aa).

Residues 1 to 13 lie on the Mitochondrial matrix side of the membrane; that stretch reads MSFNKVPNIPGAP. The chain crosses the membrane as a helical; Signal-anchor for type II membrane protein span at residues 14–32; sequence ALSALLKVSVIGGLGVYAL. Residues 33–286 are Mitochondrial intermembrane-facing; it reads TNSLYNVDGG…LQEMNLEPKK (254 aa). Residues 186–219 are a coiled coil; that stretch reads KEFTAAIEAKQVAAQEAERAKFIVEKAEQDRRSA.

The protein belongs to the prohibitin family. In terms of assembly, component of a prohibitin multimeric complex in mitochondrial membranes. Mostly expressed in proliferative tissues, including vasculature, shoot and root apical tissues.

The protein resides in the mitochondrion inner membrane. Prohibitin probably acts as a holdase/unfoldase for the stabilization of newly synthesized mitochondrial proteins. The protein is Prohibitin-2, mitochondrial (PHB2) of Arabidopsis thaliana (Mouse-ear cress).